Reading from the N-terminus, the 367-residue chain is Peptide chain release factor 2 (367 aa).

Gln254 carries the N5-methylglutamine modification.

Belongs to the prokaryotic/mitochondrial release factor family. Post-translationally, methylated by PrmC. Methylation increases the termination efficiency of RF2.

Its subcellular location is the cytoplasm. In terms of biological role, peptide chain release factor 2 directs the termination of translation in response to the peptide chain termination codons UGA and UAA. This is Peptide chain release factor 2 from Burkholderia cenocepacia (strain ATCC BAA-245 / DSM 16553 / LMG 16656 / NCTC 13227 / J2315 / CF5610) (Burkholderia cepacia (strain J2315)).